A 196-amino-acid polypeptide reads, in one-letter code: Protein LIGHT-DEPENDENT SHORT HYPOCOTYLS 6 (196 aa).

The span at 1-16 (MESADSGRSDPVKGDD) shows a compositional bias: basic and acidic residues. Disordered stretches follow at residues 1–36 (MESA…ESQK) and 149–196 (ARGI…AVPP). The region spanning 31-158 (RYESQKRRDW…ARGIPYEKKK (128 aa)) is the ALOG domain. Residues 156–160 (KKKRK) carry the Nuclear localization signal motif.

This sequence belongs to the plant homeotic and developmental regulators ALOG protein family.

It is found in the nucleus. Functionally, probable transcription regulator that acts as a developmental regulator by promoting cell growth in response to light. The protein is Protein LIGHT-DEPENDENT SHORT HYPOCOTYLS 6 (LSH6) of Arabidopsis thaliana (Mouse-ear cress).